The primary structure comprises 303 residues: tRNA-cytidine(32) 2-sulfurtransferase (303 aa).

A PP-loop motif motif is present at residues 45 to 50 (SGGKDS). 3 residues coordinate [4Fe-4S] cluster: Cys120, Cys123, and Cys211.

The protein belongs to the TtcA family. In terms of assembly, homodimer. Requires Mg(2+) as cofactor. [4Fe-4S] cluster is required as a cofactor.

It localises to the cytoplasm. The catalysed reaction is cytidine(32) in tRNA + S-sulfanyl-L-cysteinyl-[cysteine desulfurase] + AH2 + ATP = 2-thiocytidine(32) in tRNA + L-cysteinyl-[cysteine desulfurase] + A + AMP + diphosphate + H(+). It functions in the pathway tRNA modification. Catalyzes the ATP-dependent 2-thiolation of cytidine in position 32 of tRNA, to form 2-thiocytidine (s(2)C32). The sulfur atoms are provided by the cysteine/cysteine desulfurase (IscS) system. This Methylobacillus flagellatus (strain ATCC 51484 / DSM 6875 / VKM B-1610 / KT) protein is tRNA-cytidine(32) 2-sulfurtransferase.